The chain runs to 367 residues: uncharacterized protein (367 aa).

Its subcellular location is the mitochondrion. This is an uncharacterized protein from Paramecium tetraurelia.